Consider the following 69-residue polypeptide: Cytochrome c oxidase subunit 8A, mitochondrial (69 aa).

A mitochondrion-targeting transit peptide spans 1 to 25; the sequence is MSVLTSLLLRGLTGSARRLPVPRAK. The SIFI-degron motif lies at 2 to 19; the sequence is SVLTSLLLRGLTGSARRL. The Mitochondrial matrix segment spans residues 26 to 36; it reads VHSMPPEEELG. The chain crosses the membrane as a helical span at residues 37–60; that stretch reads TLEKAIALTSCFVSLFLPAGWILS. Over 61 to 69 the chain is Mitochondrial intermembrane; sequence HLEDYKRPE.

It belongs to the cytochrome c oxidase VIII family. Component of the cytochrome c oxidase (complex IV, CIV), a multisubunit enzyme composed of 14 subunits. The complex is composed of a catalytic core of 3 subunits MT-CO1, MT-CO2 and MT-CO3, encoded in the mitochondrial DNA, and 11 supernumerary subunits COX4I, COX5A, COX5B, COX6A, COX6B, COX6C, COX7A, COX7B, COX7C, COX8 and NDUFA4, which are encoded in the nuclear genome. The complex exists as a monomer or a dimer and forms supercomplexes (SCs) in the inner mitochondrial membrane with NADH-ubiquinone oxidoreductase (complex I, CI) and ubiquinol-cytochrome c oxidoreductase (cytochrome b-c1 complex, complex III, CIII), resulting in different assemblies (supercomplex SCI(1)III(2)IV(1) and megacomplex MCI(2)III(2)IV(2)). In response to mitochondrial stress, the precursor protein is ubiquitinated by the SIFI complex in the cytoplasm before mitochondrial import, leading to its degradation. Within the SIFI complex, UBR4 initiates ubiquitin chain that are further elongated or branched by KCMF1.

It localises to the mitochondrion inner membrane. Its pathway is energy metabolism; oxidative phosphorylation. Its function is as follows. Component of the cytochrome c oxidase, the last enzyme in the mitochondrial electron transport chain which drives oxidative phosphorylation. The respiratory chain contains 3 multisubunit complexes succinate dehydrogenase (complex II, CII), ubiquinol-cytochrome c oxidoreductase (cytochrome b-c1 complex, complex III, CIII) and cytochrome c oxidase (complex IV, CIV), that cooperate to transfer electrons derived from NADH and succinate to molecular oxygen, creating an electrochemical gradient over the inner membrane that drives transmembrane transport and the ATP synthase. Cytochrome c oxidase is the component of the respiratory chain that catalyzes the reduction of oxygen to water. Electrons originating from reduced cytochrome c in the intermembrane space (IMS) are transferred via the dinuclear copper A center (CU(A)) of subunit 2 and heme A of subunit 1 to the active site in subunit 1, a binuclear center (BNC) formed by heme A3 and copper B (CU(B)). The BNC reduces molecular oxygen to 2 water molecules using 4 electrons from cytochrome c in the IMS and 4 protons from the mitochondrial matrix. This is Cytochrome c oxidase subunit 8A, mitochondrial (COX8A) from Papio anubis (Olive baboon).